Reading from the N-terminus, the 115-residue chain is Hydrogenase maturation factor HypA (115 aa).

Ni(2+) is bound at residue H2. Residues C73, C76, C89, and C92 each coordinate Zn(2+).

It belongs to the HypA/HybF family.

Functionally, involved in the maturation of [NiFe] hydrogenases. Required for nickel insertion into the metal center of the hydrogenase. The polypeptide is Hydrogenase maturation factor HypA (Aquifex aeolicus (strain VF5)).